The chain runs to 152 residues: uncharacterized protein (152 aa).

A signal peptide spans 1–16 (MRKLLISLALAIPVFA). The region spanning 20–135 (NLLQKGYEVY…AVAYWLYHNY (116 aa)) is the Cytochrome c domain. Residues C33, C36, and H37 each coordinate heme c.

This is an uncharacterized protein from Aquifex aeolicus (strain VF5).